The chain runs to 427 residues: Hydroxylamine reductase (427 aa).

Residues Cys-3, Cys-6, Cys-15, and Cys-21 each contribute to the [4Fe-4S] cluster site. Residues His-129, Glu-153, Cys-197, Cys-283, Cys-311, Cys-336, Glu-370, and Lys-372 each contribute to the hybrid [4Fe-2O-2S] cluster site. Cys-283 bears the Cysteine persulfide mark.

Belongs to the HCP family. It depends on [4Fe-4S] cluster as a cofactor. Hybrid [4Fe-2O-2S] cluster serves as cofactor.

It localises to the cytoplasm. It carries out the reaction A + NH4(+) + H2O = hydroxylamine + AH2 + H(+). In terms of biological role, catalyzes the reduction of hydroxylamine to form NH(3) and H(2)O. The sequence is that of Hydroxylamine reductase from Moorella thermoacetica (strain ATCC 39073 / JCM 9320).